Here is a 214-residue protein sequence, read N- to C-terminus: Large ribosomal subunit protein bL25 (214 aa).

Residues 194-214 form a disordered region; that stretch reads TTEAEETAEPEVIRRKEEEEE. Over residues 204–214 the composition is skewed to basic and acidic residues; the sequence is EVIRRKEEEEE.

This sequence belongs to the bacterial ribosomal protein bL25 family. CTC subfamily. Part of the 50S ribosomal subunit; part of the 5S rRNA/L5/L18/L25 subcomplex. Contacts the 5S rRNA. Binds to the 5S rRNA independently of L5 and L18.

This is one of the proteins that binds to the 5S RNA in the ribosome where it forms part of the central protuberance. The protein is Large ribosomal subunit protein bL25 of Thermotoga petrophila (strain ATCC BAA-488 / DSM 13995 / JCM 10881 / RKU-1).